A 104-amino-acid chain; its full sequence is Large ribosomal subunit protein uL24 (104 aa).

Belongs to the universal ribosomal protein uL24 family. Part of the 50S ribosomal subunit.

One of two assembly initiator proteins, it binds directly to the 5'-end of the 23S rRNA, where it nucleates assembly of the 50S subunit. Its function is as follows. One of the proteins that surrounds the polypeptide exit tunnel on the outside of the subunit. The polypeptide is Large ribosomal subunit protein uL24 (Nitrobacter winogradskyi (strain ATCC 25391 / DSM 10237 / CIP 104748 / NCIMB 11846 / Nb-255)).